Reading from the N-terminus, the 256-residue chain is Large ribosomal subunit protein bL28m (256 aa).

The N-terminal 55 residues, 1 to 55 (MPLHKVPVGLWKRLRLREGIYSRLPAHYLRSLEEARTPTPVHFRPHGAKFKINPK), are a transit peptide targeting the mitochondrion.

This sequence belongs to the bacterial ribosomal protein bL28 family. In terms of assembly, component of the mitochondrial ribosome large subunit (39S) which comprises a 16S rRNA and about 50 distinct proteins. Interacts with OXA1L.

The protein resides in the mitochondrion. The chain is Large ribosomal subunit protein bL28m (MRPL28) from Bos taurus (Bovine).